The following is a 103-amino-acid chain: Large ribosomal subunit protein bL21 (103 aa).

Belongs to the bacterial ribosomal protein bL21 family. As to quaternary structure, part of the 50S ribosomal subunit. Contacts protein L20.

This protein binds to 23S rRNA in the presence of protein L20. The polypeptide is Large ribosomal subunit protein bL21 (Mannheimia succiniciproducens (strain KCTC 0769BP / MBEL55E)).